The sequence spans 588 residues: Adenine deaminase (588 aa).

The protein belongs to the metallo-dependent hydrolases superfamily. Adenine deaminase family. In terms of assembly, homodimer. Requires Mn(2+) as cofactor.

It catalyses the reaction adenine + H2O + H(+) = hypoxanthine + NH4(+). The protein is Adenine deaminase of Escherichia coli O157:H7 (strain EC4115 / EHEC).